A 173-amino-acid chain; its full sequence is Probable chemoreceptor glutamine deamidase CheD (173 aa).

The protein belongs to the CheD family.

It carries out the reaction L-glutaminyl-[protein] + H2O = L-glutamyl-[protein] + NH4(+). In terms of biological role, probably deamidates glutamine residues to glutamate on methyl-accepting chemotaxis receptors (MCPs), playing an important role in chemotaxis. This chain is Probable chemoreceptor glutamine deamidase CheD, found in Haloarcula marismortui (strain ATCC 43049 / DSM 3752 / JCM 8966 / VKM B-1809) (Halobacterium marismortui).